Reading from the N-terminus, the 565-residue chain is NAD-dependent malic enzyme (565 aa).

Residue tyrosine 104 is the Proton donor of the active site. Residue arginine 157 participates in NAD(+) binding. Lysine 175 functions as the Proton acceptor in the catalytic mechanism. A divalent metal cation is bound by residues glutamate 246, aspartate 247, and aspartate 270. Residues aspartate 270 and asparagine 418 each coordinate NAD(+).

It belongs to the malic enzymes family. Homotetramer. Mg(2+) serves as cofactor. The cofactor is Mn(2+).

It carries out the reaction (S)-malate + NAD(+) = pyruvate + CO2 + NADH. The catalysed reaction is oxaloacetate + H(+) = pyruvate + CO2. The chain is NAD-dependent malic enzyme from Escherichia coli O157:H7.